The chain runs to 780 residues: ATP-dependent 6-phosphofructokinase, muscle type (780 aa).

N-acetylthreonine is present on Thr2. The segment at 2 to 390 (THEEHHAAKT…NWEVYKLLAH (389 aa)) is N-terminal catalytic PFK domain 1. ATP contacts are provided by residues Gly25, 88–89 (RC), and 118–121 (GDGS). Asp119 lines the Mg(2+) pocket. Ser133 is modified (phosphoserine). Residues 164–166 (SID), Arg201, 208–210 (MGR), Glu264, Arg292, and 298–301 (HVQR) each bind substrate. The Proton acceptor role is filled by Asp166. Ser377 is modified (phosphoserine). Residues 391–401 (VRPPVSKSGSH) form an interdomain linker region. The tract at residues 402-780 (TVAVMNVGAP…TRKRSGEAAV (379 aa)) is C-terminal regulatory PFK domain 2. Beta-D-fructose 2,6-bisphosphate is bound by residues Arg471 and 528–532 (TVSNN). O-linked (GlcNAc) serine glycosylation is present at Ser530. The residue at position 557 (Lys557) is an N6-(2-hydroxyisobutyryl)lysine. Beta-D-fructose 2,6-bisphosphate is bound by residues Arg566, 573–575 (MGG), Glu629, Arg655, and 661–664 (HMQQ). A Phosphoserine modification is found at Ser667. Arg735 lines the beta-D-fructose 2,6-bisphosphate pocket. A Phosphoserine modification is found at Ser775.

It belongs to the phosphofructokinase type A (PFKA) family. ATP-dependent PFK group I subfamily. Eukaryotic two domain clade 'E' sub-subfamily. In terms of assembly, homo- and heterotetramers. Phosphofructokinase (PFK) enzyme functions as a tetramer composed of different combinations of 3 types of subunits, called PFKM (where M stands for Muscle), PFKL (Liver) and PFKP (Platelet). The composition of the PFK tetramer differs according to the tissue type it is present in. In muscles, it is composed of 4 PFKM subunits (also called M4). In the liver, the predominant form is a tetramer of PFKL subunits (L4). In erythrocytes, both PFKM and PFKL subunits randomly tetramerize to form M4, L4 and other combinations (ML3, M2L2, M3L). The kinetic and regulatory properties of the tetrameric enzyme are dependent on the subunit composition, hence can vary across tissues. Interacts (via C-terminus) with HK1 (via N-terminal spermatogenic cell-specific region). It depends on Mg(2+) as a cofactor. GlcNAcylation decreases enzyme activity.

The protein localises to the cytoplasm. The catalysed reaction is beta-D-fructose 6-phosphate + ATP = beta-D-fructose 1,6-bisphosphate + ADP + H(+). The protein operates within carbohydrate degradation; glycolysis; D-glyceraldehyde 3-phosphate and glycerone phosphate from D-glucose: step 3/4. Allosterically activated by ADP, AMP, or fructose 2,6-bisphosphate, and allosterically inhibited by ATP or citrate. Catalyzes the phosphorylation of D-fructose 6-phosphate to fructose 1,6-bisphosphate by ATP, the first committing step of glycolysis. The protein is ATP-dependent 6-phosphofructokinase, muscle type (PFKM) of Homo sapiens (Human).